Reading from the N-terminus, the 339-residue chain is Transcription factor IIIA (339 aa).

C2H2-type zinc fingers lie at residues 13 to 37, 43 to 67, 73 to 98, 105 to 129, 135 to 159, 162 to 188, 192 to 214, 221 to 246, and 252 to 276; these read YICS…LCKH, FPCK…SITH, FKCD…NRFH, YVCH…QFTH, YKCP…EKVH, YPCK…KECH, VMCD…KKTH, YCCP…QSFH, and FACE…SVVH. Composition is skewed to basic and acidic residues over residues 275–288 and 305–316; these read VHDP…EKCP and KSKEKSAAKATE. Positions 275–339 are disordered; the sequence is VHDPEKRKLK…ETKGSLVIEK (65 aa).

As to expression, synthesized in oocytes and, in much lower levels, in somatic cells.

It is found in the nucleus. Its function is as follows. Involved in ribosomal large subunit biogenesis. Interacts with the internal control region (ICR) of approximately 50 bases within the 5S RNA genes, is required for correct transcription of these genes by RNA polymerase III. Also binds the transcribed 5S RNA's. This chain is Transcription factor IIIA (gtf3a), found in Xenopus borealis (Kenyan clawed frog).